Reading from the N-terminus, the 58-residue chain is UPF0391 membrane protein VP0082 (58 aa).

The next 2 membrane-spanning stretches (helical) occupy residues 4-24 (WMFI…SGIA) and 30-50 (VAQV…VFVI).

Belongs to the UPF0391 family.

The protein localises to the cell membrane. The polypeptide is UPF0391 membrane protein VP0082 (Vibrio parahaemolyticus serotype O3:K6 (strain RIMD 2210633)).